A 275-amino-acid chain; its full sequence is 2-dehydro-3-deoxyphosphooctonate aldolase (275 aa).

It belongs to the KdsA family.

The protein localises to the cytoplasm. It catalyses the reaction D-arabinose 5-phosphate + phosphoenolpyruvate + H2O = 3-deoxy-alpha-D-manno-2-octulosonate-8-phosphate + phosphate. It participates in carbohydrate biosynthesis; 3-deoxy-D-manno-octulosonate biosynthesis; 3-deoxy-D-manno-octulosonate from D-ribulose 5-phosphate: step 2/3. The protein operates within bacterial outer membrane biogenesis; lipopolysaccharide biosynthesis. The polypeptide is 2-dehydro-3-deoxyphosphooctonate aldolase (Francisella tularensis subsp. novicida (strain U112)).